The chain runs to 279 residues: 3-methyl-2-oxobutanoate hydroxymethyltransferase (279 aa).

2 residues coordinate Mg(2+): aspartate 43 and aspartate 82. Residues 43-44, aspartate 82, and lysine 112 contribute to the 3-methyl-2-oxobutanoate site; that span reads DS. Residue glutamate 114 participates in Mg(2+) binding. Glutamate 181 acts as the Proton acceptor in catalysis.

Belongs to the PanB family. Homodecamer; pentamer of dimers. Mg(2+) is required as a cofactor.

The protein resides in the cytoplasm. The catalysed reaction is 3-methyl-2-oxobutanoate + (6R)-5,10-methylene-5,6,7,8-tetrahydrofolate + H2O = 2-dehydropantoate + (6S)-5,6,7,8-tetrahydrofolate. The protein operates within cofactor biosynthesis; (R)-pantothenate biosynthesis; (R)-pantoate from 3-methyl-2-oxobutanoate: step 1/2. Catalyzes the reversible reaction in which hydroxymethyl group from 5,10-methylenetetrahydrofolate is transferred onto alpha-ketoisovalerate to form ketopantoate. The polypeptide is 3-methyl-2-oxobutanoate hydroxymethyltransferase (Bacillus pumilus (strain SAFR-032)).